We begin with the raw amino-acid sequence, 170 residues long: Peptide deformylase (170 aa).

Positions 94 and 136 each coordinate Fe cation. The active site involves E137. Position 140 (H140) interacts with Fe cation.

The protein belongs to the polypeptide deformylase family. It depends on Fe(2+) as a cofactor.

It catalyses the reaction N-terminal N-formyl-L-methionyl-[peptide] + H2O = N-terminal L-methionyl-[peptide] + formate. Its function is as follows. Removes the formyl group from the N-terminal Met of newly synthesized proteins. Requires at least a dipeptide for an efficient rate of reaction. N-terminal L-methionine is a prerequisite for activity but the enzyme has broad specificity at other positions. In Xylella fastidiosa (strain M12), this protein is Peptide deformylase.